Consider the following 468-residue polypeptide: Peripherin (468 aa).

Residues 1-16 are compositionally biased toward low complexity; it reads MSHHSSGLRSSISSTS. A disordered region spans residues 1–22; it reads MSHHSSGLRSSISSTSYRRTFG. Residues 1-96 are head; that stretch reads MSHHSSGLRS…FLATRSNEKQ (96 aa). Y17 bears the 3'-nitrotyrosine mark. A phosphoserine mark is found at S28, S50, and S59. An IF rod domain is found at 94-404; that stretch reads EKQELQELND…KLLEGEESRI (311 aa). The coil 1A stretch occupies residues 97-129; it reads ELQELNDRFANFIEKVRFLEQQNAALRGELSQA. Residues 130 to 140 are linker 1; that stretch reads RGQEPARADQL. The segment at 141-236 is coil 1B; it reads CQQELRELRR…KLHEEELRDL (96 aa). Positions 237 to 259 are linker 2; the sequence is QVSVESQQVQQVEVEATVKPELT. Residues 260 to 402 are coil 2; the sequence is AALRDIRAQY…YRKLLEGEES (143 aa). 3'-nitrotyrosine is present on Y376. The segment at 403 to 468 is tail; the sequence is RISVPVHSFA…ELDKSSIHSY (66 aa). The interval 445–468 is disordered; it reads GEKVVTESQKEQHSELDKSSIHSY. A Phosphotyrosine modification is found at Y468.

This sequence belongs to the intermediate filament family. In terms of assembly, forms homodimers (in vitro). Homopolymerizes into a filamentous network (in vitro). Forms heterodimers with NEFL, NEFM or NEFH (in vitro). Interacts with DST (via C-terminus). Interacts with RAB7A; the interaction is direct. Interacts with PRKCE (via phorbol-ester/DAG-type 2 domain). In terms of processing, phosphorylated; phosphorylation increases after nerve injury in regenerating neurons. As to expression, expressed in hypoglossal motor neurons (at protein level). Expressed in the small and large sensory neurons of the dorsal root ganglion (at protein level). Expressed in cutaneous and muscular sensory neurons.

It is found in the cytoplasm. It localises to the cytoskeleton. The protein localises to the cell projection. The protein resides in the axon. Its subcellular location is the perikaryon. Class-III neuronal intermediate filament protein. My form an independent structural network without the involvement of other neurofilaments or may cooperate with the neuronal intermediate filament proteins NEFL, NEFH, NEFM and INA to form a filamentous network. Assembly of the neuronal intermediate filaments may be regulated by RAB7A. Plays a role in the development of unmyelinated sensory neurons. May be involved in axon elongation and axon regeneration after injury. Inhibits neurite extension in type II spiral ganglion neurons in the cochlea. This is Peripherin (Prph) from Rattus norvegicus (Rat).